Consider the following 192-residue polypeptide: tRNA (pseudouridine(54)-N(1))-methyltransferase (192 aa).

S-adenosyl-L-methionine is bound by residues Leu127 and Cys181.

Belongs to the methyltransferase superfamily. TrmY family. Homodimer.

The protein localises to the cytoplasm. It carries out the reaction pseudouridine(54) in tRNA + S-adenosyl-L-methionine = N(1)-methylpseudouridine(54) in tRNA + S-adenosyl-L-homocysteine + H(+). Its function is as follows. Specifically catalyzes the N1-methylation of pseudouridine at position 54 (Psi54) in tRNAs. This is tRNA (pseudouridine(54)-N(1))-methyltransferase from Methanocella arvoryzae (strain DSM 22066 / NBRC 105507 / MRE50).